A 403-amino-acid polypeptide reads, in one-letter code: uncharacterized protein (403 aa).

His-81 contacts Zn(2+). Asp-83 is an active-site residue. A Zn(2+)-binding site is contributed by Asp-114. The active-site Proton acceptor is the Glu-148. Residues Glu-149, Glu-174, and His-374 each contribute to the Zn(2+) site.

This sequence belongs to the peptidase M20A family. The cofactor is Zn(2+). Co(2+) serves as cofactor.

This is an uncharacterized protein from Escherichia coli O157:H7.